A 62-amino-acid polypeptide reads, in one-letter code: DNA gyrase inhibitor YacG (62 aa).

Zn(2+) is bound by residues Cys-9, Cys-12, Cys-27, and Cys-31. Residues 43-52 are compositionally biased toward basic and acidic residues; it reads GYRIPGEKAP. The segment at 43-62 is disordered; the sequence is GYRIPGEKAPESGGEEPGDE.

This sequence belongs to the DNA gyrase inhibitor YacG family. As to quaternary structure, interacts with GyrB. Requires Zn(2+) as cofactor.

Its function is as follows. Inhibits all the catalytic activities of DNA gyrase by preventing its interaction with DNA. Acts by binding directly to the C-terminal domain of GyrB, which probably disrupts DNA binding by the gyrase. The sequence is that of DNA gyrase inhibitor YacG from Geobacter sp. (strain M21).